A 218-amino-acid polypeptide reads, in one-letter code: Phosphatidylserine decarboxylase proenzyme (218 aa).

Ser187 functions as the Schiff-base intermediate with substrate; via pyruvic acid in the catalytic mechanism. Pyruvic acid (Ser); by autocatalysis is present on Ser187.

Belongs to the phosphatidylserine decarboxylase family. PSD-A subfamily. Heterodimer of a large membrane-associated beta subunit and a small pyruvoyl-containing alpha subunit. Requires pyruvate as cofactor. Post-translationally, is synthesized initially as an inactive proenzyme. Formation of the active enzyme involves a self-maturation process in which the active site pyruvoyl group is generated from an internal serine residue via an autocatalytic post-translational modification. Two non-identical subunits are generated from the proenzyme in this reaction, and the pyruvate is formed at the N-terminus of the alpha chain, which is derived from the carboxyl end of the proenzyme. The post-translation cleavage follows an unusual pathway, termed non-hydrolytic serinolysis, in which the side chain hydroxyl group of the serine supplies its oxygen atom to form the C-terminus of the beta chain, while the remainder of the serine residue undergoes an oxidative deamination to produce ammonia and the pyruvoyl prosthetic group on the alpha chain.

It is found in the cell membrane. The enzyme catalyses a 1,2-diacyl-sn-glycero-3-phospho-L-serine + H(+) = a 1,2-diacyl-sn-glycero-3-phosphoethanolamine + CO2. The protein operates within phospholipid metabolism; phosphatidylethanolamine biosynthesis; phosphatidylethanolamine from CDP-diacylglycerol: step 2/2. In terms of biological role, catalyzes the formation of phosphatidylethanolamine (PtdEtn) from phosphatidylserine (PtdSer). The polypeptide is Phosphatidylserine decarboxylase proenzyme (Geobacter metallireducens (strain ATCC 53774 / DSM 7210 / GS-15)).